We begin with the raw amino-acid sequence, 187 residues long: Accessory gene regulator protein B (187 aa).

A run of 5 helical transmembrane segments spans residues 49-69 (ISIF…YMLI), 82-102 (ILCY…LINI), 106-126 (FTYL…YAPA), 144-164 (VSII…PFYA), and 166-186 (FMLL…FPKE).

This sequence belongs to the AgrB family.

Its subcellular location is the cell membrane. Its function is as follows. Essential for the production of a quorum sensing system signal molecule, the autoinducing peptide (AIP). This quorum sensing system is responsible for the regulation of the expression of virulence factor genes. Involved in the proteolytic processing of AgrD, the precursor of AIP. This is Accessory gene regulator protein B from Staphylococcus aureus (strain bovine RF122 / ET3-1).